Reading from the N-terminus, the 268-residue chain is Tryptophan synthase alpha chain (268 aa).

Catalysis depends on proton acceptor residues Glu49 and Asp60.

This sequence belongs to the TrpA family. In terms of assembly, tetramer of two alpha and two beta chains.

It carries out the reaction (1S,2R)-1-C-(indol-3-yl)glycerol 3-phosphate + L-serine = D-glyceraldehyde 3-phosphate + L-tryptophan + H2O. It participates in amino-acid biosynthesis; L-tryptophan biosynthesis; L-tryptophan from chorismate: step 5/5. Functionally, the alpha subunit is responsible for the aldol cleavage of indoleglycerol phosphate to indole and glyceraldehyde 3-phosphate. The polypeptide is Tryptophan synthase alpha chain (Escherichia coli O81 (strain ED1a)).